Here is a 328-residue protein sequence, read N- to C-terminus: Helicase VP6-A (328 aa).

Disordered regions lie at residues 31–128 (DWTE…TGAN) and 180–237 (VAEQ…SVGI). Basic and acidic residues-rich tracts occupy residues 36–61 (ETNK…EGRN), 71–83 (AKET…DRRI), and 96–109 (PGER…RGDG). Lys-110 lines the ATP pocket. The span at 110-128 (KVGGGGGDADAGVGTTGAN) shows a compositional bias: gly residues. Composition is skewed to basic and acidic residues over residues 180–205 (VAEQ…AAER) and 214–230 (PHGD…KTSE).

It belongs to the orbivirus VP6 family. Homohexamer.

It localises to the virion. The enzyme catalyses ATP + H2O = ADP + phosphate + H(+). Its function is as follows. ATP dependent RNA helicase essential for RNA packaging and viral transcription. Possesses ss- and dsRNA-binding capacity. The chain is Helicase VP6-A (Segment-9) from Bluetongue virus 1 (isolate South Africa) (BTV 1).